The chain runs to 1930 residues: Myosin-16 (1930 aa).

Residues 35-84 (DIKKSCWVKDEKEGFIAGEIQSEQGDQVTVKTVNNQTVTVKKDDVQQMNP) form the Myosin N-terminal SH3-like domain. The 687-residue stretch at 88–774 (YQASDMADMT…ILAKLEDMRD (687 aa)) folds into the Myosin motor domain. ATP is bound at residue 181 to 188 (GESGAGKT). Actin-binding regions lie at residues 652–674 (LNKL…VPNE) and 753–767 (KIGH…GILA). The IQ domain maps to 777–806 (LAKIMTMLQCRLRGFLMRIEFKKMLERRIG). Residues 835–1921 (LLNVARQEEE…ALNKLRTRHR (1087 aa)) are a coiled coil. Positions 1116–1137 (EELEAERSMRAKVEKQRSDLSR) are disordered. Residues 1120-1137 (AERSMRAKVEKQRSDLSR) show a composition bias toward basic and acidic residues.

Belongs to the TRAFAC class myosin-kinesin ATPase superfamily. Myosin family.

The protein localises to the cytoplasm. Its subcellular location is the myofibril. In terms of biological role, may play a role in masticatory muscles contraction. This is Myosin-16 from Canis lupus familiaris (Dog).